We begin with the raw amino-acid sequence, 352 residues long: Cyclin-dependent kinase 7 (352 aa).

The 284-residue stretch at Tyr-18–Phe-301 folds into the Protein kinase domain. ATP contacts are provided by residues Leu-24–Val-32 and Lys-47. Residue Asp-143 is the Proton acceptor of the active site. Ser-170 is subject to Phosphoserine; by CDK1 and CDK2. Position 176 is a phosphothreonine; by CDK2 (Thr-176).

The protein belongs to the protein kinase superfamily. CMGC Ser/Thr protein kinase family. CDC2/CDKX subfamily. In terms of assembly, probably associates with cyclin-H (ccnh) and mat1 to form a multimeric active enzyme. Post-translationally, phosphorylation of Ser-170 during mitosis inactivates the enzyme. Phosphorylation of Thr-176 is required for activity. Phosphorylated at Ser-170 and Thr-176 by CDK2.

It localises to the nucleus. It catalyses the reaction L-seryl-[protein] + ATP = O-phospho-L-seryl-[protein] + ADP + H(+). The catalysed reaction is L-threonyl-[protein] + ATP = O-phospho-L-threonyl-[protein] + ADP + H(+). It carries out the reaction [DNA-directed RNA polymerase] + ATP = phospho-[DNA-directed RNA polymerase] + ADP + H(+). Its activity is regulated as follows. Phosphorylation at Thr-176 is required for enzymatic activity. Functionally, serine/threonine kinase involved in cell cycle control and in RNA polymerase II-mediated RNA transcription. Cyclin-dependent kinases (CDKs) are activated by the binding to a cyclin and mediate the progression through the cell cycle. Each different complex controls a specific transition between 2 subsequent phases in the cell cycle. Required for both activation and complex formation of cdk1/cyclin-B during G2-M transition, and for activation of cdk2/cyclins during G1-S transition (but not complex formation). cdk7 is the catalytic subunit of the CDK-activating kinase (CAK) complex. CAK activates the cyclin-associated kinases cdk1, cdk2, cdk4 and cdk6 by threonine phosphorylation, thus regulating cell cycle progression. Initiates transcription by RNA polymerase II by mediating phosphorylation of polr2a at 'Ser-5' of the repetitive C-terminal domain (CTD) when polr2a is in complex with DNA, promoting dissociation from DNA and initiation. CAK complexed to the core-TFIIH basal transcription factor activates RNA polymerase II by serine phosphorylation of the CTD of polr2a, allowing its escape from the promoter and elongation of the transcripts. This chain is Cyclin-dependent kinase 7 (cdk7), found in Xenopus laevis (African clawed frog).